A 184-amino-acid polypeptide reads, in one-letter code: ADP-ribosylation factor-like protein 2 (184 aa).

G2 carries N-myristoyl glycine lipidation. 23–30 is a GTP binding site; sequence GLDNAGKT. A Phosphoserine modification is found at S45. Residues 66-70 and G68 contribute to the GTP site; that span reads DVGGQ. A Glycyl lysine isopeptide (Lys-Gly) (interchain with G-Cter in ubiquitin) cross-link involves residue K71. GTP is bound at residue 125-128; it reads NKQD.

Belongs to the small GTPase superfamily. Arf family. As to quaternary structure, found in a complex with ARL2, ARL2BP and SLC25A6. Found in a complex with at least ARL2, PPP2CB, PPP2R1A, PPP2R2A, PPP2R5E and TBCD. Interacts with ELMOD2. The GTP-bound form interacts with ARL2BP. The GDP-bound form interacts preferentially with TBCD. Interacts with UNC119. Found in a complex with ARL2, ARL2BP and SLC25A4. The GTP-bound form interacts with PDE6D. In terms of processing, not N-myristoylated. Expressed in brain, retina, lung, cerebellum, liver, kidney, hippocampus, spleen, cortex and heart (at protein level).

Its subcellular location is the mitochondrion intermembrane space. It localises to the cytoplasm. It is found in the cytoskeleton. The protein resides in the microtubule organizing center. The protein localises to the centrosome. Its subcellular location is the nucleus. Its function is as follows. Small GTP-binding protein which cycles between an inactive GDP-bound and an active GTP-bound form, and the rate of cycling is regulated by guanine nucleotide exchange factors (GEF) and GTPase-activating proteins (GAP). GTP-binding protein that does not act as an allosteric activator of the cholera toxin catalytic subunit. Regulates formation of new microtubules and centrosome integrity. Prevents the TBCD-induced microtubule destruction. Participates in association with TBCD, in the disassembly of the apical junction complexes. Antagonizes the effect of TBCD on epithelial cell detachment and tight and adherens junctions disassembly. Together with ARL2, plays a role in the nuclear translocation, retention and transcriptional activity of STAT3. Component of a regulated secretory pathway involved in Ca(2+)-dependent release of acetylcholine. Required for normal progress through the cell cycle. The protein is ADP-ribosylation factor-like protein 2 (Arl2) of Rattus norvegicus (Rat).